We begin with the raw amino-acid sequence, 608 residues long: MPKHSLEQIKEKITERSKKTRELYLENIFNPKNQPKIESLGCANIAHVTASMPEHLKMPLGSHKRKHFAIITAYNDMLSAHQPFKNYPDLIKKELQEHNAYASVASGVPAMCDGITQGYDGMELSLFSRDVIALSTAVGLSHNVFDGAFFLGVCDKIVPGLLIGALSFGNLASVFVPSGPMVSGIENYKKAKARQDFAMGKINREELLKVEMQSYHDVGTCTFYGTANSNQMMMEFMGLHVANSSFINPNNPLRKVLVEESAKRLASGKVLPLAKLIDEKSILNALIGLMATGGSTNHTLHLIAIARSCGVILNWDDFDAVSNLIPLLAKVYPNGSADVNAFEACGGLVFVIKELLKEGLLFEDTHTIMDTETQKGMQNYTKTPFLENNQLVYKDAINHSLNTDILRPVSDPFAANGGLKILKGNLGRAVIKISAIKDEHRKVKARAIVFKTQSEFLERFKNKELERDFVAVLPFQGPKSNGMPELHKLTTNLGALQDMGYKVALVTDGRMSGASGKVPSAIHLSPEGALNGAIIKIKDGDLIELDAPNNALNVLEKDFEKRGINPLFLETLENLEKPSFGLGRELFTSLRLNVNTAEEGGMSFGIKV.

Residues cysteine 154 and cysteine 221 each contribute to the [4Fe-4S] cluster site.

This sequence belongs to the IlvD/Edd family. [4Fe-4S] cluster serves as cofactor.

It carries out the reaction 6-phospho-D-gluconate = 2-dehydro-3-deoxy-6-phospho-D-gluconate + H2O. The protein operates within carbohydrate metabolism; Entner-Doudoroff pathway. Functionally, catalyzes the dehydration of 6-phospho-D-gluconate to 2-dehydro-3-deoxy-6-phospho-D-gluconate. This Helicobacter pylori (strain ATCC 700392 / 26695) (Campylobacter pylori) protein is Phosphogluconate dehydratase.